A 90-amino-acid chain; its full sequence is uncharacterized protein (90 aa).

Lys88 is covalently cross-linked (Isoglutamyl lysine isopeptide (Lys-Gln) (interchain with Q-Cter in protein Pup)).

This is an uncharacterized protein from Mycolicibacterium smegmatis (strain ATCC 700084 / mc(2)155) (Mycobacterium smegmatis).